The chain runs to 230 residues: Flagellar L-ring protein (230 aa).

The signal sequence occupies residues 1 to 18 (MNRLNIAVSCLATALLFG). Cys-19 carries N-palmitoyl cysteine lipidation. A lipid anchor (S-diacylglycerol cysteine) is attached at Cys-19.

The protein belongs to the FlgH family. As to quaternary structure, the basal body constitutes a major portion of the flagellar organelle and consists of four rings (L,P,S, and M) mounted on a central rod.

The protein localises to the cell outer membrane. Its subcellular location is the bacterial flagellum basal body. Assembles around the rod to form the L-ring and probably protects the motor/basal body from shearing forces during rotation. The protein is Flagellar L-ring protein of Legionella pneumophila (strain Paris).